A 382-amino-acid chain; its full sequence is Lipid-A-disaccharide synthase (382 aa).

It belongs to the LpxB family.

It catalyses the reaction 2-N,3-O-bis[(3R)-3-hydroxytetradecanoyl]-alpha-D-glucosaminyl 1-phosphate + UDP-2-N,3-O-bis[(3R)-3-hydroxytetradecanoyl]-alpha-D-glucosamine = lipid A disaccharide (E. coli) + UDP + H(+). The enzyme catalyses a lipid X + a UDP-2-N,3-O-bis[(3R)-3-hydroxyacyl]-alpha-D-glucosamine = a lipid A disaccharide + UDP + H(+). The protein operates within glycolipid biosynthesis; lipid IV(A) biosynthesis; lipid IV(A) from (3R)-3-hydroxytetradecanoyl-[acyl-carrier-protein] and UDP-N-acetyl-alpha-D-glucosamine: step 5/6. Its function is as follows. Condensation of UDP-2,3-diacylglucosamine and 2,3-diacylglucosamine-1-phosphate to form lipid A disaccharide, a precursor of lipid A, a phosphorylated glycolipid that anchors the lipopolysaccharide to the outer membrane of the cell. The sequence is that of Lipid-A-disaccharide synthase from Shigella boydii serotype 18 (strain CDC 3083-94 / BS512).